We begin with the raw amino-acid sequence, 208 residues long: UPF0637 protein Bcer98_2662 (208 aa).

The protein belongs to the UPF0637 family.

The polypeptide is UPF0637 protein Bcer98_2662 (Bacillus cytotoxicus (strain DSM 22905 / CIP 110041 / 391-98 / NVH 391-98)).